A 476-amino-acid chain; its full sequence is Scopoletin glucosyltransferase (476 aa).

The Proton acceptor role is filled by His-16. An an anthocyanidin-binding site is contributed by His-16. Asp-119 (charge relay) is an active-site residue. Residues Ala-343, Gln-345, His-360, Trp-363, Asn-364, Ser-365, and Glu-368 each coordinate UDP-alpha-D-glucose. An an anthocyanidin-binding site is contributed by Ala-383. UDP-alpha-D-glucose is bound by residues Glu-384 and Gln-385.

Belongs to the UDP-glycosyltransferase family.

It catalyses the reaction scopoletin + UDP-alpha-D-glucose = scopolin + UDP + H(+). Its function is as follows. Glucosyltransferase acting preferentially on aromatic substrates of the phenylpropanoid types. The best substrates are scopoletin and esculetin. Required for full resistance to virus. The sequence is that of Scopoletin glucosyltransferase (TOGT1) from Nicotiana tabacum (Common tobacco).